We begin with the raw amino-acid sequence, 310 residues long: ADP-L-glycero-D-manno-heptose-6-epimerase (310 aa).

NADP(+) is bound by residues 10–11 (FI), 31–32 (DN), Lys-38, Lys-53, 75–79 (EGACS), and Asn-92. Residue Tyr-140 is the Proton acceptor of the active site. Lys-144 provides a ligand contact to NADP(+). Substrate is bound at residue Asn-169. The NADP(+) site is built by Val-170 and Lys-178. Residue Lys-178 is the Proton acceptor of the active site. Substrate is bound by residues Ser-180, His-187, 201-204 (FEGS), Arg-209, and Tyr-272.

It belongs to the NAD(P)-dependent epimerase/dehydratase family. HldD subfamily. Homopentamer. NADP(+) is required as a cofactor.

It catalyses the reaction ADP-D-glycero-beta-D-manno-heptose = ADP-L-glycero-beta-D-manno-heptose. The protein operates within nucleotide-sugar biosynthesis; ADP-L-glycero-beta-D-manno-heptose biosynthesis; ADP-L-glycero-beta-D-manno-heptose from D-glycero-beta-D-manno-heptose 7-phosphate: step 4/4. Catalyzes the interconversion between ADP-D-glycero-beta-D-manno-heptose and ADP-L-glycero-beta-D-manno-heptose via an epimerization at carbon 6 of the heptose. The polypeptide is ADP-L-glycero-D-manno-heptose-6-epimerase (Salmonella newport (strain SL254)).